The sequence spans 553 residues: MFGEGNKPTEPVPAYDAGQDPFQGPNASKNQYQGSAADYNGAPPPPASQPGNQYQFRQDQYYNLNAEGEGAPIGSFEEKFPVEGEDSKPKWNDWPFTIFFAGCVIAFIVVAAITLRAWSQNSSSQGSGVYDGANTGTLTTNSAIMLAISCIIAFVFSIIGIVLARMFPKFFIIAGILFNIIAGLATAIMYLSLKYYSAGIVFLVFTAICALFYWRMRHRIPFTVAVLKTVMDVMKSYPQTWFVTLIGSIIATAFSILFSAVIVATYMKYDDKANNPGCSTNGGSCSNAKLIGLLVLVFFCGYYIAEVIRNVIHCTVSGIFGAWYYFSKSDQGMPKWPGFGALKRSLTYSFGSICFGSLIVTIIETLKAVLRLAVDGVMGGGGADNGWMQCLALIANWIFSFLEWLARYFNHYAYVFIALYGKPYLRAAKETWYMLREKGIDALINDNLVNVALSFFTLFTCYITTLFAYLYLRYTDPNYNDNNNFTPALMAFAFVIAMEICNVITETIRSGTATFFVALGNDPEVFHLSYPERFDEIFRAYPEVLKKLSHQNV.

Residues 1–53 (MFGEGNKPTEPVPAYDAGQDPFQGPNASKNQYQGSAADYNGAPPPPASQPGNQ) are disordered. Residues 1-94 (MFGEGNKPTE…EDSKPKWNDW (94 aa)) lie on the Cytoplasmic side of the membrane. The segment covering 25-34 (PNASKNQYQG) has biased composition (polar residues). A helical membrane pass occupies residues 95-115 (PFTIFFAGCVIAFIVVAAITL). Topologically, residues 116–142 (RAWSQNSSSQGSGVYDGANTGTLTTNS) are extracellular. An N-linked (GlcNAc...) asparagine glycan is attached at N121. The helical transmembrane segment at 143 to 163 (AIMLAISCIIAFVFSIIGIVL) threads the bilayer. Residues 164–169 (ARMFPK) are Cytoplasmic-facing. A helical transmembrane segment spans residues 170-190 (FFIIAGILFNIIAGLATAIMY). At 191–192 (LS) the chain is on the extracellular side. Residues 193-213 (LKYYSAGIVFLVFTAICALFY) form a helical membrane-spanning segment. The Cytoplasmic segment spans residues 214-241 (WRMRHRIPFTVAVLKTVMDVMKSYPQTW). A helical membrane pass occupies residues 242–262 (FVTLIGSIIATAFSILFSAVI). Residues 263 to 287 (VATYMKYDDKANNPGCSTNGGSCSN) lie on the Extracellular side of the membrane. Residues 288–308 (AKLIGLLVLVFFCGYYIAEVI) traverse the membrane as a helical segment. At 309–349 (RNVIHCTVSGIFGAWYYFSKSDQGMPKWPGFGALKRSLTYS) the chain is on the cytoplasmic side. A helical membrane pass occupies residues 350 to 370 (FGSICFGSLIVTIIETLKAVL). Residues 371–385 (RLAVDGVMGGGGADN) lie on the Extracellular side of the membrane. The helical transmembrane segment at 386 to 406 (GWMQCLALIANWIFSFLEWLA) threads the bilayer. At 407–450 (RYFNHYAYVFIALYGKPYLRAAKETWYMLREKGIDALINDNLVN) the chain is on the cytoplasmic side. Residues 451-471 (VALSFFTLFTCYITTLFAYLY) traverse the membrane as a helical segment. Residues 472 to 484 (LRYTDPNYNDNNN) are Extracellular-facing. The chain crosses the membrane as a helical span at residues 485 to 505 (FTPALMAFAFVIAMEICNVIT). The Cytoplasmic segment spans residues 506 to 553 (ETIRSGTATFFVALGNDPEVFHLSYPERFDEIFRAYPEVLKKLSHQNV).

This sequence belongs to the CTL (choline transporter-like) family.

Its subcellular location is the cell membrane. Functionally, probably involved in transport through the plasma membrane. The polypeptide is Protein PNS1 (PNS1) (Kluyveromyces lactis (strain ATCC 8585 / CBS 2359 / DSM 70799 / NBRC 1267 / NRRL Y-1140 / WM37) (Yeast)).